The chain runs to 184 residues: Endothelial cell-specific molecule 1 (184 aa).

An N-terminal signal peptide occupies residues 1 to 21 (MKSLLLLTTLLVPLHLGMAWS). One can recognise an IGFBP N-terminal domain in the interval 24–102 (YAVDCPEHCD…GDEFGICKDC (79 aa)). Cystine bridges form between Cys28–Cys51, Cys32–Cys53, Cys37–Cys54, Cys43–Cys57, Cys65–Cys83, and Cys77–Cys99. The tract at residues 145-184 (RTSASHTERDSASGDGNAVREEIGEGNAARPSVMKWLNPR) is disordered. The span at 150–167 (HTERDSASGDGNAVREEI) shows a compositional bias: basic and acidic residues. An O-linked (Xyl...) (chondroitin sulfate) serine glycan is attached at Ser157.

In terms of processing, O-glycosylated; contains chondroitin sulfate and dermatan sulfate.

Its subcellular location is the secreted. Functionally, involved in angiogenesis; promotes angiogenic sprouting. May have potent implications in lung endothelial cell-leukocyte interactions. This chain is Endothelial cell-specific molecule 1 (Esm1), found in Mus musculus (Mouse).